Consider the following 156-residue polypeptide: ATP synthase subunit b (156 aa).

The helical transmembrane segment at 5-27 (ITLIGQMITFAIFIGFTMKFVWP) threads the bilayer.

It belongs to the ATPase B chain family. As to quaternary structure, F-type ATPases have 2 components, F(1) - the catalytic core - and F(0) - the membrane proton channel. F(1) has five subunits: alpha(3), beta(3), gamma(1), delta(1), epsilon(1). F(0) has three main subunits: a(1), b(2) and c(10-14). The alpha and beta chains form an alternating ring which encloses part of the gamma chain. F(1) is attached to F(0) by a central stalk formed by the gamma and epsilon chains, while a peripheral stalk is formed by the delta and b chains.

It localises to the cell inner membrane. Functionally, f(1)F(0) ATP synthase produces ATP from ADP in the presence of a proton or sodium gradient. F-type ATPases consist of two structural domains, F(1) containing the extramembraneous catalytic core and F(0) containing the membrane proton channel, linked together by a central stalk and a peripheral stalk. During catalysis, ATP synthesis in the catalytic domain of F(1) is coupled via a rotary mechanism of the central stalk subunits to proton translocation. Component of the F(0) channel, it forms part of the peripheral stalk, linking F(1) to F(0). The chain is ATP synthase subunit b from Francisella tularensis subsp. holarctica (strain OSU18).